Here is a 426-residue protein sequence, read N- to C-terminus: uncharacterized protein (426 aa).

Histidine 277 serves as a coordination point for Zn(2+). The active site involves glutamate 278. Zn(2+) contacts are provided by histidine 281 and glutamate 357.

It belongs to the peptidase M48B family. Zn(2+) is required as a cofactor.

This is an uncharacterized protein from Bacillus subtilis (strain 168).